We begin with the raw amino-acid sequence, 201 residues long: MSKVLVLKSSILAGYSQSNQLSDYFVEQWSEKHSADEITVRDLAANPIPVLDGELVGALRPSDAPLTPRQQEALALSDELIAELKAHDVIVIAAPMYNFNISTQLKNYFDLVARAGVTFRYTENGPEGLVTGKKAIVITSRGGIHKDGPTDLVTPYLSTFLGFIGITDVKFVFAEGIAYGPEMAAKAQSDAKAAIDSIVAA.

FMN is bound by residues Ser10, 16–18 (SQS), 96–99 (MYNF), and 140–143 (SRGG).

Belongs to the azoreductase type 1 family. Homodimer. Requires FMN as cofactor.

The enzyme catalyses 2 a quinone + NADH + H(+) = 2 a 1,4-benzosemiquinone + NAD(+). The catalysed reaction is N,N-dimethyl-1,4-phenylenediamine + anthranilate + 2 NAD(+) = 2-(4-dimethylaminophenyl)diazenylbenzoate + 2 NADH + 2 H(+). Quinone reductase that provides resistance to thiol-specific stress caused by electrophilic quinones. Its function is as follows. Also exhibits azoreductase activity. Catalyzes the reductive cleavage of the azo bond in aromatic azo compounds to the corresponding amines. This chain is FMN-dependent NADH:quinone oxidoreductase, found in Shigella flexneri serotype 5b (strain 8401).